The following is a 143-amino-acid chain: Hemoglobin subunit alpha-1 (143 aa).

Ser2 bears the N-acetylserine mark. The 142-residue stretch at 2–143 (SLTAKDKDTV…LSRALAEKYR (142 aa)) folds into the Globin domain. O2 is bound at residue His60. Heme b is bound at residue His89.

This sequence belongs to the globin family. In terms of assembly, hb1 is a heterotetramer of two alpha-1 chains and two beta-1 chains. Red blood cells.

In terms of biological role, involved in oxygen transport from gills to the various peripheral tissues. The chain is Hemoglobin subunit alpha-1 (hba1) from Anarhichas minor (Arctic spotted wolffish).